Reading from the N-terminus, the 326-residue chain is Microtubule-associated protein RP/EB family member 2 (326 aa).

Ser9 is subject to Phosphoserine. The region spanning 56–158 (TMSRHDIIAW…FIQWFKKFYD (103 aa)) is the Calponin-homology (CH) domain. Tyr166 is subject to Phosphotyrosine. Disordered regions lie at residues 170–239 (EARQ…DKDL) and 297–326 (YASDEQEGQTEEPEVEEQTHDQQPQQQEEY). Residues 186 to 326 (QIFNLPKKSH…DQQPQQQEEY (141 aa)) are DCTN1-binding. Over residues 199–233 (SPTAGAAKSSPAAKPGSTPSRPSSAKRASSSGSAS) the composition is skewed to low complexity. Residues Ser218 and Ser235 each carry the phosphoserine modification. One can recognise an EB1 C-terminal domain in the interval 235 to 305 (SDKDLETQVI…LYASDEQEGQ (71 aa)). The APC-binding stretch occupies residues 258–301 (EGVEKERDFYFGKLREIELLCQEHGQENDDLVQRLMEVLYASDE). The segment covering 300–312 (DEQEGQTEEPEVE) has biased composition (acidic residues). The span at 317 to 326 (DQQPQQQEEY) shows a compositional bias: low complexity.

This sequence belongs to the MAPRE family. As to quaternary structure, interacts with DCTN1. Interacts with APC (via C-terminal). Interacts with monomeric and polymerized tubulin. Interacts with SLAIN1. Interacts (via the N-terminal region) with BAG1. Interacts with ASB14. Interacts with HAX1; this interaction is essential for epidermal cell migration. Post-translationally, phosphorylated at Ser-235 by CK2 leading to enhanced cell adhesion. Phosphorylated by CDK1 and AURKB during mitosis reduces the binding affinity of MAPRE2 for microtubules. In terms of processing, ubiquitinated in an ASB14-dependent manner; leading to proteasomal degradation.

Its subcellular location is the cytoplasm. It is found in the cytoskeleton. Adapter protein that is involved in microtubule polymerization, and spindle function by stabilizing microtubules and anchoring them at centrosomes. Therefore, ensures mitotic progression and genome stability. Acts as a central regulator of microtubule reorganization in apico-basal epithelial differentiation. Plays a role during oocyte meiosis by regulating microtubule dynamics. Participates in neurite growth by interacting with plexin B3/PLXNB3 and microtubule reorganization during apico-basal epithelial differentiation. Also plays an essential role for cell migration and focal adhesion dynamics. Mechanistically, recruits HAX1 to microtubules in order to regulate focal adhesion dynamics. The sequence is that of Microtubule-associated protein RP/EB family member 2 (Mapre2) from Rattus norvegicus (Rat).